A 302-amino-acid chain; its full sequence is Mitochondrial glycine transporter (302 aa).

3 Solcar repeats span residues 22–112 (HPVF…LKHH), 119–203 (PKPL…AKKL), and 213–297 (FSPV…MMEK). Helical transmembrane passes span 28 to 53 (FVCG…TRLQ), 87 to 113 (GVSP…KHHF), 125 to 150 (VMLG…TRYE), 178 to 201 (GLTA…TRAK), 217 to 243 (LNFG…KTHI), and 272 to 290 (GGLP…AWTV).

This sequence belongs to the mitochondrial carrier (TC 2.A.29) family. SLC25A38 subfamily.

The protein localises to the mitochondrion inner membrane. It catalyses the reaction glycine(in) = glycine(out). In terms of biological role, mitochondrial glycine transporter that imports glycine into the mitochondrial matrix. Plays an important role in providing glycine for the first enzymatic step in heme biosynthesis, the condensation of glycine with succinyl-CoA to produce 5-aminolevulinate (ALA) in the mitochondrial matrix. Required during erythropoiesis. Its function is as follows. May play a role as pro-apoptotic protein that induces caspase-dependent apoptosis. The sequence is that of Mitochondrial glycine transporter from Xenopus tropicalis (Western clawed frog).